Reading from the N-terminus, the 307-residue chain is Vesicle-trafficking protein SEC22a (307 aa).

Position 2 is an N-acetylserine (S2). Topologically, residues S2–P187 are cytoplasmic. S6 and S8 each carry phosphoserine. The 112-residue stretch at S8–I119 folds into the Longin domain. A helical membrane pass occupies residues A188 to I208. Topologically, residues R209–N226 are lumenal. The chain crosses the membrane as a helical span at residues Y227–Y247. Topologically, residues Y248–N253 are cytoplasmic. A helical membrane pass occupies residues V254–Y271. The Lumenal portion of the chain corresponds to E272 to R274. Residues N275–L295 form a helical membrane-spanning segment. The Cytoplasmic portion of the chain corresponds to R296–V307.

Belongs to the synaptobrevin family.

The protein resides in the endoplasmic reticulum membrane. May be involved in vesicle transport between the ER and the Golgi complex. The chain is Vesicle-trafficking protein SEC22a (SEC22A) from Macaca fascicularis (Crab-eating macaque).